The chain runs to 201 residues: Large ribosomal subunit protein uL4 (201 aa).

The disordered stretch occupies residues 39-67; the sequence is ARQGSRAQKTRSEVAGGGRKPWKQKGSGR.

It belongs to the universal ribosomal protein uL4 family. In terms of assembly, part of the 50S ribosomal subunit.

In terms of biological role, one of the primary rRNA binding proteins, this protein initially binds near the 5'-end of the 23S rRNA. It is important during the early stages of 50S assembly. It makes multiple contacts with different domains of the 23S rRNA in the assembled 50S subunit and ribosome. Forms part of the polypeptide exit tunnel. This is Large ribosomal subunit protein uL4 from Marinomonas sp. (strain MWYL1).